A 672-amino-acid polypeptide reads, in one-letter code: MRTALLEVGLEELPASEFHSILRQLEEKSAELLKAYRISSGSVEVFVGSRRFGVILNNLPERQEDFTEEKKGPPLNIAYDENGKPTRALEGFLRNNNASLENVVHREGYVYLSRVVEGKPVEEVLPDLFRDLVLGLNFRKPMRWGSGEHEYVRPVHWIVAMVDGRVLDLEIFGLRSSRISYGKRYHAGSIEIPDPERYYESLKKGFVISSHLERKKFVLEQIDEFEKRSGMKIERDEELIEEIVAITEYPRIVVGQFDRKYLELPEEIIVTAVKHHQRSFIAHKETLTNIFVAFQDGPQPPENVVKGYERVINARLEDARYYFQKDLETSLEKMNEKLKEIVFQEKLGTLYDKVERIKKISQRLCEDLKLPEMFTQKVLEAASICKADIASKVVYEFPELQGVMGRIYALREGINEEIATAIEDHYSEEPQTVIGSILGIADRIDTIVGNFAIGNVPTSSKDPYGLKSKADTIFRIIRKNEWDISLEELLTFASSLVKYHLSEELETFFAGRFYQFLINELGISFDVARAVNHLWKKPLRGILSAEALQEISEKPEFQDLFVGFERVHNITKNHDSTKFDGALFEKEEEKKLMNKFYEVKEKVLKALERLNYREALQYLIELKPYIDEYFDNVFVMVKRDDLRVNRLSFLKNIDELFMMVGDMTYLVKRSQV.

This sequence belongs to the class-II aminoacyl-tRNA synthetase family. In terms of assembly, tetramer of two alpha and two beta subunits.

It localises to the cytoplasm. The catalysed reaction is tRNA(Gly) + glycine + ATP = glycyl-tRNA(Gly) + AMP + diphosphate. The polypeptide is Glycine--tRNA ligase beta subunit (Thermotoga sp. (strain RQ2)).